The chain runs to 219 residues: MTAPGHGLESLERRGLMFVLSSPSGAGKTTLSRLLIERVAGLKMSVSATTRTKRPGEEDGRDYYFVDHARFQAMTENAELLEWANVFDNCYGTPRAPVEAALAVGQDVLFDIDWQGTQQLREKARDDVVSVFILPPSAADLEKRLHTRAQDSDEVIRGRMSRASHELSHFAEYDYIVVNHDIDEAFAEVHSILKAERLKRERRTGLTAFVRDLQKQLER.

The region spanning 15-194 (GLMFVLSSPS…AFAEVHSILK (180 aa)) is the Guanylate kinase-like domain. 22–29 (SPSGAGKT) is an ATP binding site.

This sequence belongs to the guanylate kinase family.

The protein localises to the cytoplasm. The catalysed reaction is GMP + ATP = GDP + ADP. In terms of biological role, essential for recycling GMP and indirectly, cGMP. In Rhodopseudomonas palustris (strain BisB18), this protein is Guanylate kinase.